Consider the following 345-residue polypeptide: Anthranilate phosphoribosyltransferase (345 aa).

Residues Gly-88, 91–92 (GD), Thr-96, 98–101 (NIST), 116–124 (KHGNRSASG), and Ser-128 each bind 5-phospho-alpha-D-ribose 1-diphosphate. Residue Gly-88 participates in anthranilate binding. Residue Ser-100 coordinates Mg(2+). Residue Asn-119 coordinates anthranilate. Arg-174 contacts anthranilate. Asp-233 and Glu-234 together coordinate Mg(2+).

It belongs to the anthranilate phosphoribosyltransferase family. In terms of assembly, homodimer. Requires Mg(2+) as cofactor.

The catalysed reaction is N-(5-phospho-beta-D-ribosyl)anthranilate + diphosphate = 5-phospho-alpha-D-ribose 1-diphosphate + anthranilate. It functions in the pathway amino-acid biosynthesis; L-tryptophan biosynthesis; L-tryptophan from chorismate: step 2/5. Its function is as follows. Catalyzes the transfer of the phosphoribosyl group of 5-phosphorylribose-1-pyrophosphate (PRPP) to anthranilate to yield N-(5'-phosphoribosyl)-anthranilate (PRA). This chain is Anthranilate phosphoribosyltransferase, found in Prochlorococcus marinus (strain NATL2A).